The chain runs to 30 residues: Truncated interleukin-1-binding protein (30 aa).

Positions 1–18 (MSILPVIFLPIFFYSSFV) are cleaved as a signal peptide.

Belongs to the interleukin-1 receptor family.

In Vaccinia virus (strain Copenhagen) (VACV), this protein is Truncated interleukin-1-binding protein.